A 200-amino-acid polypeptide reads, in one-letter code: NADH-quinone oxidoreductase subunit C (200 aa).

This sequence belongs to the complex I 30 kDa subunit family. NDH-1 is composed of 14 different subunits. Subunits NuoB, C, D, E, F, and G constitute the peripheral sector of the complex.

It localises to the cell inner membrane. The enzyme catalyses a quinone + NADH + 5 H(+)(in) = a quinol + NAD(+) + 4 H(+)(out). NDH-1 shuttles electrons from NADH, via FMN and iron-sulfur (Fe-S) centers, to quinones in the respiratory chain. The immediate electron acceptor for the enzyme in this species is believed to be ubiquinone. Couples the redox reaction to proton translocation (for every two electrons transferred, four hydrogen ions are translocated across the cytoplasmic membrane), and thus conserves the redox energy in a proton gradient. The chain is NADH-quinone oxidoreductase subunit C from Burkholderia multivorans (strain ATCC 17616 / 249).